The sequence spans 95 residues: Mitochondrial import inner membrane translocase subunit Tim13 (95 aa).

An N-acetylmethionine modification is found at Met-1. A Phosphoserine modification is found at Ser-7. The Twin CX3C motif signature appears at 46 to 69 (CFRKCIGKPGGSLDNSEQKCIAMC). 2 cysteine pairs are disulfide-bonded: Cys-46-Cys-69 and Cys-50-Cys-65. Residue Lys-53 is modified to N6-succinyllysine.

The protein belongs to the small Tim family. As to quaternary structure, heterohexamer; composed of 3 copies of TIMM8 (TIMM8A or TIMM8B) and 3 copies of TIMM13, named soluble 70 kDa complex. Associates with the TIM22 complex, whose core is composed of TIMM22. In terms of tissue distribution, ubiquitous, with highest expression in heart, kidney, liver and skeletal muscle.

Its subcellular location is the mitochondrion inner membrane. Functionally, mitochondrial intermembrane chaperone that participates in the import and insertion of some multi-pass transmembrane proteins into the mitochondrial inner membrane. Also required for the transfer of beta-barrel precursors from the TOM complex to the sorting and assembly machinery (SAM complex) of the outer membrane. Acts as a chaperone-like protein that protects the hydrophobic precursors from aggregation and guide them through the mitochondrial intermembrane space. The TIMM8-TIMM13 complex mediates the import of proteins such as TIMM23, SLC25A12/ARALAR1 and SLC25A13/ARALAR2, while the predominant TIMM9-TIMM10 70 kDa complex mediates the import of much more proteins. This is Mitochondrial import inner membrane translocase subunit Tim13 (TIMM13) from Homo sapiens (Human).